The sequence spans 1373 residues: MDPIRSRTPSPARELLPGPQPDRVQPTADRGGAPPAGGPLDGLPARRTMSRTRLPSPPAPSPAFSAGSFSDLLRQFDPSLLDTSLLDSMPAVGTPHTAAAPAECDEVQSGLRAADDPPPTVRVAVTAARPPRAKPAPRRRAAQPSDASPAAQVDLRTLGYSQQQQEKIKPKVGSTVAQHHEALVGHGFTHAHIVALSRHPAALGTVAVKYQDMIAALPEATHEDIVGVGKQWSGARALEALLTVAGELRGPPLQLDTGQLVKIAKRGGVTAVEAVHASRNALTGAPLNLTPAQVVAIASNNGGKQALETVQRLLPVLCQAHGLTPAQVVAIASHDGGKQALETMQRLLPVLCQAHGLPPDQVVAIASNIGGKQALETVQRLLPVLCQAHGLTPDQVVAIASHGGGKQALETVQRLLPVLCQAHGLTPDQVVAIASHDGGKQALETVQRLLPVLCQAHGLTPDQVVAIASNGGGKQALETVQRLLPVLCQAHGLTPDQVVAIASNGGKQALETVQRLLPVLCQAHGLTPDQVVAIASHDGGKQALETVQRLLPVLCQTHGLTPAQVVAIASHDGGKQALETVQQLLPVLCQAHGLTPDQVVAIASNIGGKQALATVQRLLPVLCQAHGLTPDQVVAIASNGGGKQALETVQRLLPVLCQAHGLTPDQVVAIASNGGGKQALETVQRLLPVLCQAHGLTQVQVVAIASNIGGKQALETVQRLLPVLCQAHGLTPAQVVAIASHDGGKQALETVQRLLPVLCQAHGLTPDQVVAIASNGGGKQALETVQRLLPVLCQAHGLTQEQVVAIASNNGGKQALETVQRLLPVLCQAHGLTPDQVVAIASNGGGKQALETVQRLLPVLCQAHGLTPAQVVAIASNIGGKQALETVQRLLPVLCQDHGLTLAQVVAIASNIGGKQALETVQRLLPVLCQAHGLTQDQVVAIASNIGGKQALETVQRLLPVLCQDHGLTPDQVVAIASNIGGKQALETVQRLLPVLCQDHGLTLDQVVAIASNGGKQALETVQRLLPVLCQDHGLTPDQVVAIASNSGGKQALETVQRLLPVLCQDHGLTPNQVVAIASNGGKQALESIVAQLSRPDPALAALTNDHLVALACLGGRPAMDAVKKGLPHAPELIRRVNRRIGERTSHRVADYAQVVRVLEFFQCHSHPAYAFDEAMTQFGMSRNGLVQLFRRVGVTELEARGGTLPPASQRWDRILQASGMKRAKPSPTSAQTPDQASLHAFADSLERDLDAPSPMHEGDQTGASSRKRSRSDRAVTGPSAQHSFEVRVPEQRDALHLPLSWRVKRPRTRIGGGLPDPGTPIAADLAASSTVMWEQDAAPFAGAADDFPAFNEEELAWLMELLPQSGSVGGTI.

Disordered regions lie at residues 1-68 (MDPI…SAGS) and 127-152 (AARP…PAAQ). Residues 131-141 (PRAKPAPRRRA) are compositionally biased toward basic residues. Residues 142 to 152 (AQPSDASPAAQ) are compositionally biased toward low complexity. Residues 221 to 239 (THEDIVGVGKQWSGARALE) form a Cryptic repeat -1 repeat. The Cryptic repeat 0 repeat unit spans residues 256–273 (DTGQLVKIAKRGGVTAVE). Core repeat repeat units follow at residues 289–322 (LTPA…QAHG), 323–356 (LTPA…QAHG), 357–390 (LPPD…QAHG), 391–424 (LTPD…QAHG), 425–458 (LTPD…QAHG), 459–492 (LTPD…QAHG), 493–525 (LTPD…QAHG), 526–559 (LTPD…QTHG), 560–593 (LTPA…QAHG), 594–627 (LTPD…QAHG), 628–661 (LTPD…QAHG), 662–695 (LTPD…QAHG), 696–729 (LTQV…QAHG), 730–763 (LTPA…QAHG), 764–797 (LTPD…QAHG), 798–831 (LTQE…QAHG), 832–865 (LTPD…QAHG), 866–899 (LTPA…QDHG), 900–933 (LTLA…QAHG), 934–967 (LTQD…QDHG), 968–1001 (LTPD…QDHG), 1002–1034 (LTLD…QDHG), and 1035–1068 (LTPD…QDHG). HEAT repeat units follow at residues 714 to 760 (LETV…VLCQ), 782 to 828 (LETV…VLCQ), 850 to 893 (LETV…LLPV), and 918 to 961 (LETV…LLPV). Residues 1053–1091 (LETVQRLLPVLCQDHGLTPNQVVAIASNGGKQALESIVA) form an HEAT 5 repeat. Residues 1069-1087 (LTPNQVVAIASNGGKQALE) form a Core repeat 23.5 repeat. Residues 1136-1364 (RVNRRIGERT…ELAWLMELLP (229 aa)) are acidic activation domain. Residues 1222–1225 (KRAK) carry the Nuclear localization signal NLS1 motif. A disordered region spans residues 1250 to 1286 (LDAPSPMHEGDQTGASSRKRSRSDRAVTGPSAQHSFE). A Nuclear localization signal NLS2 motif is present at residues 1268 to 1271 (KRSR). A Nuclear localization signal NLS3 motif is present at residues 1305 to 1308 (KRPR).

It belongs to the transcription activator-like effector (TALE) family.

The protein resides in the secreted. It is found in the host nucleus. Functionally, avirulence protein. Acts as a transcription factor in rice, inducing expression of a number of host genes including SWEET11 (Os8N3, XA13, AC Q6YZF3) in susceptible plants with the Xa13 allele. Plants with the xa13 allele, which has an altered promoter, are resistant to bacterial blight caused by this bacterial strain and do not induce SWEET11. The xa13 allele elicits an atypical hypersensitive response (HR). PthXo1 binds SWEET11 promoter DNA in a sequence-specific manner. This is TAL effector protein PthXo1 (pthXo1) from Xanthomonas oryzae pv. oryzae (strain PXO99A).